Here is a 136-residue protein sequence, read N- to C-terminus: Immunoglobulin J chain (136 aa).

Intrachain disulfides connect cysteine 12–cysteine 100, cysteine 71–cysteine 91, and cysteine 108–cysteine 133. The N-linked (GlcNAc...) (complex) asparagine glycan is linked to asparagine 48.

In terms of assembly, part of the secretory IgA (sIgA) complex that consists of two, four or five IgA monomers, and two additional non-Ig polypeptides, namely the JCHAIN and the secretory component (the proteolytic product of PIGR). Part of the secretory IgM (sIgM) complex that consist of five IgM monomers, and two additional non-Ig polypeptides, namely the JCHAIN and the secretory component (the proteolytic product of PIGR). JCHAIN-containing IgM interacts (via CH4 domain) with FCRM (via Ig-like domain).

It localises to the secreted. In terms of biological role, serves to link two monomer units of either IgM or IgA. In the case of IgM, the J chain-joined dimer is a nucleating unit for the IgM pentamer, and in the case of IgA it induces dimers and/or larger polymers. It also helps to bind these immunoglobulins to secretory component. This is Immunoglobulin J chain from Oryctolagus cuniculus (Rabbit).